The sequence spans 161 residues: Phosphopantetheine adenylyltransferase (161 aa).

Ser-8 is a substrate binding site. Residues 8–9 and His-16 contribute to the ATP site; that span reads SF. Residues 36–40, Leu-72, and Arg-86 contribute to the substrate site; that span reads ENPRK. ATP-binding positions include 87 to 89, Glu-97, and 122 to 128; these read GLR and FSFISSS. Glu-132 contacts substrate.

It belongs to the bacterial CoaD family. Homohexamer. It depends on Mg(2+) as a cofactor.

Its subcellular location is the cytoplasm. It catalyses the reaction (R)-4'-phosphopantetheine + ATP + H(+) = 3'-dephospho-CoA + diphosphate. Its pathway is cofactor biosynthesis; coenzyme A biosynthesis; CoA from (R)-pantothenate: step 4/5. In terms of biological role, reversibly transfers an adenylyl group from ATP to 4'-phosphopantetheine, yielding dephospho-CoA (dPCoA) and pyrophosphate. The polypeptide is Phosphopantetheine adenylyltransferase (Thermotoga maritima (strain ATCC 43589 / DSM 3109 / JCM 10099 / NBRC 100826 / MSB8)).